The following is a 181-amino-acid chain: UPF0398 protein lin2003 (181 aa).

This sequence belongs to the UPF0398 family.

This is UPF0398 protein lin2003 from Listeria innocua serovar 6a (strain ATCC BAA-680 / CLIP 11262).